Reading from the N-terminus, the 182-residue chain is Putative manganese efflux pump MntP (182 aa).

A run of 6 helical transmembrane segments spans residues Leu-6–Gly-26, Ile-37–Val-57, His-71–Leu-91, Ile-101–Leu-121, Ile-131–Ile-151, and Tyr-162–Ile-182.

It belongs to the MntP (TC 9.B.29) family.

The protein localises to the cell membrane. Its function is as follows. Probably functions as a manganese efflux pump. This is Putative manganese efflux pump MntP from Bacillus cereus (strain ATCC 10987 / NRS 248).